Here is a 323-residue protein sequence, read N- to C-terminus: Methionyl-tRNA formyltransferase (323 aa).

Residue 113–116 (SLLP) participates in (6S)-5,6,7,8-tetrahydrofolate binding.

Belongs to the Fmt family.

It catalyses the reaction L-methionyl-tRNA(fMet) + (6R)-10-formyltetrahydrofolate = N-formyl-L-methionyl-tRNA(fMet) + (6S)-5,6,7,8-tetrahydrofolate + H(+). In terms of biological role, attaches a formyl group to the free amino group of methionyl-tRNA(fMet). The formyl group appears to play a dual role in the initiator identity of N-formylmethionyl-tRNA by promoting its recognition by IF2 and preventing the misappropriation of this tRNA by the elongation apparatus. The protein is Methionyl-tRNA formyltransferase of Porphyromonas gingivalis (strain ATCC 33277 / DSM 20709 / CIP 103683 / JCM 12257 / NCTC 11834 / 2561).